The primary structure comprises 885 residues: Sensor histidine kinase KdpD (885 aa).

A run of 4 helical transmembrane segments spans residues 384–404, 415–435, 436–456, and 464–484; these read AIDMLKMILIQIICVMMGLWI, IILMIFLIGIILLSIWTRSFI, IGFLAAIINVFVFNYFFTEPR, and FDYPITFIVSILTSILTSALL. The Histidine kinase domain maps to 660–880; sequence SISHDIRTPL…IFYFNIYTDF (221 aa). H663 bears the Phosphohistidine; by autocatalysis mark.

Its subcellular location is the membrane. It catalyses the reaction ATP + protein L-histidine = ADP + protein N-phospho-L-histidine.. Cyclic di-AMP is a negative regulator of the Kdp system. In terms of biological role, member of the two-component regulatory system KdpD/KdpE that regulates the transcription of a series of virulence factors through sensing external K(+) concentrations. Also regulates capsular polysaccharide production. May function as a membrane-associated protein kinase that phosphorylates KdpE in response to environmental signals. In turn, KpdE functions as a transcriptional regulator by direct binding to promoter regions of target genes including spa, hla, aur and geh. This is Sensor histidine kinase KdpD from Staphylococcus aureus (strain NCTC 8325 / PS 47).